The sequence spans 199 residues: 7-methyl-GTP pyrophosphatase (199 aa).

Aspartate 73 (proton acceptor) is an active-site residue.

The protein belongs to the Maf family. YceF subfamily. It depends on a divalent metal cation as a cofactor.

It is found in the cytoplasm. It catalyses the reaction N(7)-methyl-GTP + H2O = N(7)-methyl-GMP + diphosphate + H(+). In terms of biological role, nucleoside triphosphate pyrophosphatase that hydrolyzes 7-methyl-GTP (m(7)GTP). May have a dual role in cell division arrest and in preventing the incorporation of modified nucleotides into cellular nucleic acids. This chain is 7-methyl-GTP pyrophosphatase, found in Bordetella bronchiseptica (strain ATCC BAA-588 / NCTC 13252 / RB50) (Alcaligenes bronchisepticus).